Consider the following 2372-residue polypeptide: Nonribosomal peptide synthase roqA (2372 aa).

The interval 217–610 is adenylation 1; it reads EHCRSQPDAE…VGRKDREVKI (394 aa). A disordered region spans residues 723–745; it reads AASSHSSTREQPSNQRDKEDVEL. Residues 725–736 are compositionally biased toward polar residues; that stretch reads SSHSSTREQPSN. A Carrier 1 domain is found at 750 to 823; sequence SAKENTLCSV…KIARCTAESK (74 aa). At S784 the chain carries O-(pantetheine 4'-phosphoryl)serine. The segment at 856-1122 is condensation 1; the sequence is EDIYPCTPLQ…FATFPFRTQL (267 aa). Positions 1290–1679 are adenylation 2; the sequence is QPNSEAVCAW…VGRKDTQVKL (390 aa). One can recognise a Carrier 2 domain in the interval 1819 to 1895; the sequence is KPTTEQERFV…LFCKHVILIQ (77 aa). Residue S1856 is modified to O-(pantetheine 4'-phosphoryl)serine. A condensation 2 region spans residues 1962–2227; that stretch reads TSNYTSTAIF…FNVLPCRIAI (266 aa).

The protein operates within alkaloid biosynthesis. In terms of biological role, dipeptide synthase; part of the gene cluster that mediates the biosynthesis of the mycotoxins roquefortine C and meleagrin. The first stage is catalyzed by the dipeptide synthase roqA which condenses histidine and tryptophan to produce histidyltryptophanyldiketopiperazine (HTD). HTD is then converted to roquefortine C through two possible pathways. In the first pathway, prenyltransferase roqD transforms HTD to the intermediate roquefortine D, which is in turn converted to roquefortine C by the cytochrome P450 monooxygenase roqR. In the second pathway, HTD is first converted to the intermediate dehydrohistidyltryptophanyldi-ketopiperazine (DHTD) by roqR which is then prenylated by roqD to form roquefortine C. Roquefortine C can be further transformed to meleagrin via three more reactions including oxydation to glandicolin A by roqM, which is further reduced to glandicoline B by roqO. Finally, glandicoline B is converted to meleagrin by the glandicoline B O-methyltransferase roqN. More studies identified further branching and additional metabolites produced by the roquefortine/meleagrin cluster, including roquefortine F, roquefortine L, roquefortine M, roquefortine N and neoxaline. This Penicillium rubens (strain ATCC 28089 / DSM 1075 / NRRL 1951 / Wisconsin 54-1255) (Penicillium chrysogenum) protein is Nonribosomal peptide synthase roqA.